We begin with the raw amino-acid sequence, 80 residues long: Acyl carrier protein (80 aa).

The region spanning 4 to 79 (DEIFSKVRSI…DVVNFIKKRK (76 aa)) is the Carrier domain. S39 bears the O-(pantetheine 4'-phosphoryl)serine mark.

This sequence belongs to the acyl carrier protein (ACP) family. In terms of processing, 4'-phosphopantetheine is transferred from CoA to a specific serine of apo-ACP by AcpS. This modification is essential for activity because fatty acids are bound in thioester linkage to the sulfhydryl of the prosthetic group.

The protein localises to the cytoplasm. The protein operates within lipid metabolism; fatty acid biosynthesis. Its function is as follows. Carrier of the growing fatty acid chain in fatty acid biosynthesis. This Borrelia garinii subsp. bavariensis (strain ATCC BAA-2496 / DSM 23469 / PBi) (Borreliella bavariensis) protein is Acyl carrier protein.